A 475-amino-acid chain; its full sequence is FAD-dependent monooxygenase penE (475 aa).

The FAD site is built by glutamate 35, glycine 49, and arginine 108. Tyrosine 216 is an active-site residue. 2 residues coordinate FAD: aspartate 308 and alanine 321. Asparagine 437 is a glycosylation site (N-linked (GlcNAc...) asparagine). A helical transmembrane segment spans residues 446–466; it reads WGSIWLSPVILCLFCMLFLWP.

It belongs to the paxM FAD-dependent monooxygenase family. The cofactor is FAD.

It is found in the membrane. It carries out the reaction [(1'E)-3'-hydroxy-3',7'-dimethylocta-1',6'-dien-1'-yl]-quinolinone B + NADPH + O2 + H(+) = [(1'E)-5'-(3',3'-dimethyloxiran-2'-yl)-3'-hydroxy-3'-methylpent-1'-en-1'-yl]-quinolinone B + NADP(+) + H2O. It participates in secondary metabolite biosynthesis. It functions in the pathway alkaloid biosynthesis. The protein operates within mycotoxin biosynthesis. In terms of biological role, FAD-dependent monooxygenase; part of the gene cluster that mediates the biosynthesis of penigequinolones, potent insecticidal alkaloids that contain a highly modified 10-carbon prenyl group. The first stage is catalyzed by the nonribosomal peptide synthetase penN that condenses anthranilic acid and O-methyl-L-tyrosine to produce 4'-methoxycyclopeptin. 4'-methoxycyclopeptin is then converted to 4'-methoxydehydrocyclopeptin by the ketoglutarate-dependent dioxygenase penM through dehydrogenation to form a double bond between C-alpha and C-beta of the O-methyltyrosine side chain. PenM also converts its first product methoxydehydrocyclopeptin to 4'-methoxycyclopenin. The following conversion of 4'methoxycyclopenin into 4'-methoxyviridicatin is catalyzed by the cyclopenase penL. 4'-methoxyviridicatin is the precursor of quinolone natural products, and is further converted to quinolinone B. The prenyltransferase penI then catalyzes the canonical Friedel-Crafts alkylation of quinolinone B with dimethylallyl cation to yield dimethylallyl quinolone, which is subjected to FAD-dependent dehydrogenation by the FAD-linked oxidoreductase penH to yield conjugated aryl diene. The delta(3') double bond then serves as the site of the second alkylation with DMAPP catalyzed by the prenyltransferase penG to yield a carbenium ion intermediate, which can be attacked by H(2)O to yield a styrenyl quinolone containing a C3'-hydroxyprenyl chain, or undergo cyclization to yield yaequinolones J1 and J2. The conversion of the styrenyl quinolone into the tetrahydrofuran-containing yaequinolone C is performed by the FAD-dependent monooxygenase penE and involves epoxidation of the terminal C7'-C8' olefin, followed by epoxide ring opening initiated by the C3' hydroxyl group. The predicted cysteine hydrolase penJ acts as an epoxide hydrolase that enhances the rate of the 5-exo-tet cyclization step, increasing the yield of yaequinolone C. PenF catalyzes the cationic rearrangement of the epoxide formed by penE (before ring opening to produce yaequinolone C) into yaequinolone D. Finally, the short-chain dehydrogenase/reductase (SDR)-like reductase penD, catalyzes both the dehydration of yaequinolone D and the reduction of the resulting oxonium to yield penigequinolone. The sequence is that of FAD-dependent monooxygenase penE from Penicillium thymicola.